The chain runs to 496 residues: Cytochrome P450 71B14 (496 aa).

A helical membrane pass occupies residues 1 to 21 (MIWWFIVGASFFFAFILIAKD). C436 contacts heme.

The protein belongs to the cytochrome P450 family. It depends on heme as a cofactor.

Its subcellular location is the membrane. In Arabidopsis thaliana (Mouse-ear cress), this protein is Cytochrome P450 71B14 (CYP71B14).